Consider the following 346-residue polypeptide: Hydroxyproline O-galactosyltransferase HPGT3 (346 aa).

The segment covering 1–10 has biased composition (polar residues); sequence MESLPTTVPS. Residues 1–21 form a disordered region; it reads MESLPTTVPSKSERRARSSKF. Residues 1–28 lie on the Cytoplasmic side of the membrane; the sequence is MESLPTTVPSKSERRARSSKFSQSSSKP. The chain crosses the membrane as a helical; Signal-anchor for type II membrane protein span at residues 29–45; sequence SVIMAFFSCVAWLYVAG. Topologically, residues 46-346 are lumenal; sequence RLWQDAENRV…IRQDKVCSVA (301 aa).

The protein belongs to the glycosyltransferase 31 family. It depends on Mn(2+) as a cofactor. As to expression, expressed in roots, rosette leaves, cauline leaves, stems, flowers and siliques.

It is found in the golgi apparatus membrane. It functions in the pathway protein modification; protein glycosylation. Functionally, possesses hydroxyproline O-galactosyltransferase activity. Transfers galactose from UDP-galactose to hydroxyproline residues in the arabinogalactan proteins (AGPs). Is specific for AGPs containing non-contiguous peptidyl hydroxyproline residues. The addition of galactose onto the peptidyl hydroxyproline residues in AGP core proteins represents the first committed step in arabinogalactan polysaccharide addition. AGP glycans play essential roles in both vegetative and reproductive plant growth. This Arabidopsis thaliana (Mouse-ear cress) protein is Hydroxyproline O-galactosyltransferase HPGT3.